A 963-amino-acid polypeptide reads, in one-letter code: Bifunctional glutamine synthetase adenylyltransferase/adenylyl-removing enzyme (963 aa).

The segment at 1–451 (MAAPSELQLY…EHFADIIAER (451 aa)) is adenylyl removase. Residues 461–963 (TIEWKALWAG…VAFWEKVFAE (503 aa)) are adenylyl transferase.

The protein belongs to the GlnE family. It depends on Mg(2+) as a cofactor.

The enzyme catalyses [glutamine synthetase]-O(4)-(5'-adenylyl)-L-tyrosine + phosphate = [glutamine synthetase]-L-tyrosine + ADP. The catalysed reaction is [glutamine synthetase]-L-tyrosine + ATP = [glutamine synthetase]-O(4)-(5'-adenylyl)-L-tyrosine + diphosphate. Involved in the regulation of glutamine synthetase GlnA, a key enzyme in the process to assimilate ammonia. When cellular nitrogen levels are high, the C-terminal adenylyl transferase (AT) inactivates GlnA by covalent transfer of an adenylyl group from ATP to specific tyrosine residue of GlnA, thus reducing its activity. Conversely, when nitrogen levels are low, the N-terminal adenylyl removase (AR) activates GlnA by removing the adenylyl group by phosphorolysis, increasing its activity. The regulatory region of GlnE binds the signal transduction protein PII (GlnB) which indicates the nitrogen status of the cell. The protein is Bifunctional glutamine synthetase adenylyltransferase/adenylyl-removing enzyme of Hahella chejuensis (strain KCTC 2396).